Consider the following 155-residue polypeptide: Ribosomal RNA large subunit methyltransferase H (155 aa).

Residues Leu-72, Gly-103, and 122-127 (LSDLTL) contribute to the S-adenosyl-L-methionine site.

This sequence belongs to the RNA methyltransferase RlmH family. As to quaternary structure, homodimer.

Its subcellular location is the cytoplasm. It carries out the reaction pseudouridine(1915) in 23S rRNA + S-adenosyl-L-methionine = N(3)-methylpseudouridine(1915) in 23S rRNA + S-adenosyl-L-homocysteine + H(+). In terms of biological role, specifically methylates the pseudouridine at position 1915 (m3Psi1915) in 23S rRNA. The protein is Ribosomal RNA large subunit methyltransferase H of Albidiferax ferrireducens (strain ATCC BAA-621 / DSM 15236 / T118) (Rhodoferax ferrireducens).